Here is a 182-residue protein sequence, read N- to C-terminus: ATP synthase subunit delta (182 aa).

The protein belongs to the ATPase delta chain family. F-type ATPases have 2 components, F(1) - the catalytic core - and F(0) - the membrane proton channel. F(1) has five subunits: alpha(3), beta(3), gamma(1), delta(1), epsilon(1). F(0) has three main subunits: a(1), b(2) and c(10-14). The alpha and beta chains form an alternating ring which encloses part of the gamma chain. F(1) is attached to F(0) by a central stalk formed by the gamma and epsilon chains, while a peripheral stalk is formed by the delta and b chains.

The protein localises to the cell inner membrane. Its function is as follows. F(1)F(0) ATP synthase produces ATP from ADP in the presence of a proton or sodium gradient. F-type ATPases consist of two structural domains, F(1) containing the extramembraneous catalytic core and F(0) containing the membrane proton channel, linked together by a central stalk and a peripheral stalk. During catalysis, ATP synthesis in the catalytic domain of F(1) is coupled via a rotary mechanism of the central stalk subunits to proton translocation. This protein is part of the stalk that links CF(0) to CF(1). It either transmits conformational changes from CF(0) to CF(1) or is implicated in proton conduction. This chain is ATP synthase subunit delta, found in Pseudothermotoga lettingae (strain ATCC BAA-301 / DSM 14385 / NBRC 107922 / TMO) (Thermotoga lettingae).